A 603-amino-acid chain; its full sequence is NADH-ubiquinone oxidoreductase chain 5 (603 aa).

A run of 16 helical transmembrane segments spans residues 4-24 (FTTM…ATLI), 38-58 (TAIA…ICLG), 89-109 (FLPV…WYMA), 122-142 (LIFL…QLFI), 171-191 (AILY…WFLL), 211-233 (LPLL…HPWL), 241-261 (TPVS…FLLI), 273-293 (IQTL…ICAL), 301-320 (IVAF…IGIN), 325-347 (ALLH…GSII), 366-386 (MPLT…MPFL), 405-424 (NTWA…AYST), 457-477 (LMLG…PMSL), 488-508 (LAAL…NYLA), 524-544 (IMLG…SLLM), and 582-602 (GLIK…LLMI).

The protein belongs to the complex I subunit 5 family. In terms of assembly, core subunit of respiratory chain NADH dehydrogenase (Complex I) which is composed of 45 different subunits.

It localises to the mitochondrion inner membrane. The enzyme catalyses a ubiquinone + NADH + 5 H(+)(in) = a ubiquinol + NAD(+) + 4 H(+)(out). In terms of biological role, core subunit of the mitochondrial membrane respiratory chain NADH dehydrogenase (Complex I) which catalyzes electron transfer from NADH through the respiratory chain, using ubiquinone as an electron acceptor. Essential for the catalytic activity and assembly of complex I. The polypeptide is NADH-ubiquinone oxidoreductase chain 5 (MT-ND5) (Pongo abelii (Sumatran orangutan)).